Reading from the N-terminus, the 132-residue chain is Small ribosomal subunit protein uS8 (132 aa).

Belongs to the universal ribosomal protein uS8 family. As to quaternary structure, part of the 30S ribosomal subunit. Contacts proteins S5 and S12.

Functionally, one of the primary rRNA binding proteins, it binds directly to 16S rRNA central domain where it helps coordinate assembly of the platform of the 30S subunit. This is Small ribosomal subunit protein uS8 from Corynebacterium efficiens (strain DSM 44549 / YS-314 / AJ 12310 / JCM 11189 / NBRC 100395).